A 192-amino-acid polypeptide reads, in one-letter code: Adenylate kinase (192 aa).

10–18 (GVPGVGGTT) contributes to the ATP binding site.

The protein belongs to the archaeal adenylate kinase family. Monomer.

Its subcellular location is the cytoplasm. The enzyme catalyses AMP + ATP = 2 ADP. The chain is Adenylate kinase from Methanococcus maripaludis (strain C5 / ATCC BAA-1333).